The chain runs to 564 residues: Protein glycosylation K (564 aa).

Residues 1–15 (MLKKLFFILSKEDKN) are Cytoplasmic-facing. A helical transmembrane segment spans residues 16–38 (FLFFLLVFSVFISFIETFAISLV). Residues 17 to 319 (LFFLLVFSVF…IITSYHDLLY (303 aa)) form the ABC transmembrane type-1 domain. Residues 39–76 (MPFITLASDFSYFDRNKYLISLKEYLNIPVFEIIVYFG) are Extracellular-facing. Residues 46–67 (SDFSYFDRNKYLISLKEYLNIP) form an important for stimulation of ATPase activity by lipid-linked oligosaccharides and subsequent translocation of lipid-linked oligosaccharides region. The chain crosses the membrane as a helical span at residues 77–98 (VGLIVFYVFRALLNAYYFHLLA). Topologically, residues 99 to 149 (RFSKGRYHAIAYKVFSKFLNINYEKFTQKNQSEILKSITGEVYNLSTMISS) are cytoplasmic. The chain crosses the membrane as a helical span at residues 150–170 (FLLLMSEIFVVLLLYALMLLI). Topologically, residues 171–173 (NYK) are extracellular. A helical membrane pass occupies residues 174-197 (ITLFLSIFMVLNAFILVKILSPII). Residues 198–254 (KKAGVRREEAMKNFFEILNTNLNNFKFIKLKTKEDGVLSLFKAQSEAFSKANITNES) are Cytoplasmic-facing. A helical transmembrane segment spans residues 255–276 (VAAVPRIYLEGIGFCVLVFIVV). Over 277-292 (FLVLKNESDISGILST) the chain is Extracellular. Residues 293 to 314 (ISIFVLALYRLMPSANRIITSY) form a helical membrane-spanning segment. The Cytoplasmic portion of the chain corresponds to 315–564 (HDLLYYHSSL…LEHGKLKEEK (250 aa)). Residues 349–564 (LKICNLSFGY…LEHGKLKEEK (216 aa)) form the ABC transporter domain. 382 to 389 (GESGCGKS) contributes to the ATP binding site.

This sequence belongs to the ABC transporter superfamily. Homodimer; domain-swapped. Helices that arise in transmembrane regions 4 and 5 from one subunit cross over and contact the nucleotide-binding domain from the other subunit.

The protein localises to the cell inner membrane. It catalyses the reaction ATP + H2O + lipopolysaccharideSide 1 = ADP + phosphate + lipopolysaccharideSide 2.. It participates in protein modification; protein glycosylation. In terms of biological role, mediates the ATP-dependent translocation of the undecaprenylpyrophosphate-linked heptasaccharide intermediate across the cell membrane; this is an essential step during the N-linked protein glycosylation pathway. Transport across the membrane is effected via ATP-driven conformation changes. Most likely, only the polar and charged part of the glycolipid enter the substrate-binding cavity, and the lipid tail remains exposed to the membrane lipids during the transmembrane flipping process. The polypeptide is Protein glycosylation K (pglK) (Campylobacter jejuni subsp. jejuni serotype O:2 (strain ATCC 700819 / NCTC 11168)).